A 766-amino-acid polypeptide reads, in one-letter code: Isocitrate lyase 2 (766 aa).

A substrate-binding site is contributed by glycine 106–tryptophan 108. A Mg(2+)-binding site is contributed by aspartate 177. Cysteine 215 acts as the Proton acceptor in catalysis. Residues glycine 216–histidine 217, arginine 252, asparagine 487–serine 491, and threonine 522 contribute to the substrate site.

Belongs to the isocitrate lyase/PEP mutase superfamily. Isocitrate lyase family. The cofactor is Mg(2+).

The enzyme catalyses D-threo-isocitrate = glyoxylate + succinate. Its pathway is carbohydrate metabolism; glyoxylate cycle; (S)-malate from isocitrate: step 1/2. Functionally, involved in the persistence and virulence of Mycobacterium. Catalyzes the reversible formation of succinate and glyoxylate from isocitrate, a key step of the glyoxylate cycle, which operates as an anaplerotic route for replenishing the tricarboxylic acid cycle during growth on fatty acid substrates. This Mycobacterium bovis (strain ATCC BAA-935 / AF2122/97) protein is Isocitrate lyase 2 (aceA).